The chain runs to 310 residues: tRNA uridine(34) hydroxylase (310 aa).

One can recognise a Rhodanese domain in the interval 127–225 (KDKNTIVVDT…YLEDMSKEES (99 aa)). Catalysis depends on cysteine 185, which acts as the Cysteine persulfide intermediate.

This sequence belongs to the TrhO family.

The catalysed reaction is uridine(34) in tRNA + AH2 + O2 = 5-hydroxyuridine(34) in tRNA + A + H2O. Its function is as follows. Catalyzes oxygen-dependent 5-hydroxyuridine (ho5U) modification at position 34 in tRNAs. This Prochlorococcus marinus subsp. pastoris (strain CCMP1986 / NIES-2087 / MED4) protein is tRNA uridine(34) hydroxylase.